Reading from the N-terminus, the 270-residue chain is Putative pyruvate, phosphate dikinase regulatory protein (270 aa).

151 to 158 (GVSRTSKT) lines the ADP pocket.

This sequence belongs to the pyruvate, phosphate/water dikinase regulatory protein family. PDRP subfamily.

It catalyses the reaction N(tele)-phospho-L-histidyl/L-threonyl-[pyruvate, phosphate dikinase] + ADP = N(tele)-phospho-L-histidyl/O-phospho-L-threonyl-[pyruvate, phosphate dikinase] + AMP + H(+). The enzyme catalyses N(tele)-phospho-L-histidyl/O-phospho-L-threonyl-[pyruvate, phosphate dikinase] + phosphate + H(+) = N(tele)-phospho-L-histidyl/L-threonyl-[pyruvate, phosphate dikinase] + diphosphate. Functionally, bifunctional serine/threonine kinase and phosphorylase involved in the regulation of the pyruvate, phosphate dikinase (PPDK) by catalyzing its phosphorylation/dephosphorylation. In Lysinibacillus sphaericus (strain C3-41), this protein is Putative pyruvate, phosphate dikinase regulatory protein.